A 422-amino-acid chain; its full sequence is Enolase (422 aa).

Position 163 (Gln163) interacts with (2R)-2-phosphoglycerate. Glu205 serves as the catalytic Proton donor. Mg(2+) is bound by residues Asp242, Glu283, and Asp310. 4 residues coordinate (2R)-2-phosphoglycerate: Lys335, Arg364, Ser365, and Lys386. Lys335 acts as the Proton acceptor in catalysis.

It belongs to the enolase family. Mg(2+) serves as cofactor.

It localises to the cytoplasm. It is found in the secreted. Its subcellular location is the cell surface. The catalysed reaction is (2R)-2-phosphoglycerate = phosphoenolpyruvate + H2O. It functions in the pathway carbohydrate degradation; glycolysis; pyruvate from D-glyceraldehyde 3-phosphate: step 4/5. Its function is as follows. Catalyzes the reversible conversion of 2-phosphoglycerate (2-PG) into phosphoenolpyruvate (PEP). It is essential for the degradation of carbohydrates via glycolysis. In Bdellovibrio bacteriovorus (strain ATCC 15356 / DSM 50701 / NCIMB 9529 / HD100), this protein is Enolase.